The primary structure comprises 681 residues: Cryptochrome-1 (681 aa).

Residues 1–489 (MSGSVSGCGS…AKARLHEALS (489 aa)) form a CNT1, binds chromophores to sense blue light and mediate CRY dimerization region. The region spanning 12–141 (GCSIVWFRRD…AVRSFNADLL (130 aa)) is the Photolyase/cryptochrome alpha/beta domain. The cysteines at positions 80 and 190 are disulfide-linked. Tyr235 is an FAD binding site. Asn238 lines the Mg(2+) pocket. Arg239 contacts ATP. Residues Lys241, Ser244, and Thr246 each contribute to the Mg(2+) site. FAD contacts are provided by residues 247–251 (TSFLS) and Ser293. His358 lines the Mg(2+) pocket. FAD contacts are provided by residues Asp359 and 390-392 (DAD). 359-360 (DR) contributes to the ATP binding site. ATP is bound at residue Asp409. A CCT1/CCE1, mediates blue light signaling region spans residues 490-681 (QMWQLEAASR…LNWRRLSQTG (192 aa)). 2 disordered regions span residues 525-598 (RDIT…EPAS) and 616-664 (STED…TSSY). A compositionally biased stretch (polar residues) spans 583 to 598 (MVNTNQAQQRRAEPAS). A Phosphoserine modification is found at Ser616. Position 621 is a phosphothreonine (Thr621).

Belongs to the DNA photolyase class-1 family. Homodimer. Interacts with ADO1, COP1 and PHYA. Interacts specifically with the dark/far-red (Pr) state of PHYB, but not with the red light-activated (Pfr). Interacts with PIF4 and PIF5 in the nucleus in response to low blue light (LBL). Binds to SPA1 and SPA4 in response to blue light, this interaction prevents SPA1/COP1 complex formation and thus avoid COP1-dependent degradation of the transcription factor HY5 by the proteasome and promotes hypocotyl elongation. Interacts with TCP2. Binding to ATP mediates conformational changes which facilitate flavin binding. FAD serves as cofactor. Requires (6R)-5,10-methylene-5,6,7,8-tetrahydrofolate as cofactor. In terms of processing, autophosphorylated; in response to blue light and when in complex with FAD cofactor. Kinase activity is optimal in the presence of magnesium ions, about 30 percent of the optimal activity in the presence of manganese ions, but inactive with calcium ions. Adopts an open conformation when phosphorylated upon photoexcitation and thus interacts with signaling partner proteins. As to expression, widely expressed. Expressed in the aerial tissues (e.g. cotyledons and leaf primordia), but not detected in the roots.

It is found in the cytoplasm. Its subcellular location is the nucleus. It localises to the PML body. Light exposure induces a conformational change in the C-terminal domain CCT1 required for activity. Its function is as follows. Photoreceptor that mediates primarily blue light inhibition of hypocotyl elongation and photoperiodic control of floral initiation, and regulates other light responses, including circadian rhythms, tropic growth, stomata opening, guard cell development, root development, bacterial and viral pathogen responses, abiotic stress responses, cell cycles, programmed cell death, apical dominance, fruit and ovule development, seed dormancy, and magnetoreception. Photoexcited cryptochromes interact with signaling partner proteins to alter gene expression at both transcriptional and post-translational levels and, consequently, regulate the corresponding metabolic and developmental programs. Blue-light absorbing flavoprotein that activates reversible flavin photoreduction via an electron transport chain comprising a tryptophan triad (W-324, W-377 and W-400), accompanied by a large conformational change upon photoexcitation, or via an alternative electron transport that involves small metabolites, including NADPH, NADH, and ATP. The half-life of the activated signaling state is about 5 minutes. Also involved in the detection of blue/green ratio in light (shade under leaf canopies) and subsequent adaptations on plant growth and development. In darkness, the dark reoxidation of flavin occurs and leads to inactivated state. Perceives low blue light (LBL) and responds by directly contacting two bHLH transcription factors, PIF4 and PIF5, at chromatin on E-box variant 5'-CA[CT]GTG-3' to promote their activity and stimulate specific gene expression to adapt global physiology (e.g. hypocotyl elongation and hyponastic growth in low blue light). When activated by high-intensity blue light, catalyzes direct enzymatic conversion of molecular oxygen O(2) to reactive oxygen species (ROS) and hydrogen peroxide H(2)O(2) in vitro. ROS accumulation upon activation by blue light leads to cell death in protoplasts. Seems essential for blue-light-triggered and singlet oxygen-mediated programmed cell death (PCD). Required for the induction of nuclear genes encoding photoprotective components by GATA24 and GATA28 in extreme light intensities that exceed the electron utilization capacity of the chloroplast. Involved in shortening the circadian clock period, especially at 27 degrees Celsius, in blue light (BL) and required to maintain clock genes expression rhythm. Mediates blue light-induced gene expression and hypocotyl elongation through the inhibition of COP1-mediated degradation of the transcription factors BIT1 and HY5 and via the activation of anion channels at the plasma membrane, probably via auxin signaling. Required for the hypocotyl hook formation in darkness. Involved in blue light-dependent stomatal opening, CHS gene expression, transpiration, inhibition of stem growth and increase of root growth, probably by regulating abscisic acid (ABA). Prevents lateral roots growth by inhibiting auxin transport. Necessary for shade avoidance syndrome (SAS), characterized by leaf hyponasty and reduced lamina/petiole ratio, when exposed to blue light attenuation. Together with phototropins, involved in phototropism regulation by various blue light fluence; blue light attenuates phototropism in high fluence rates (100 umol.m-2.s-1) but enhances phototropism in low fluence rates (&lt;1.0 umol.m-2.s-1). Required for blue/UV-A wavelengths-mediated inhibition of explants shoot regeneration in vitro (e.g. new shoot apical meristems regeneration from excised cotyledons). Modulates anthocyanin accumulation in a PHYA-dependent manner in far-red-light. Acts as a PHYA/PHYB-dependent modulator of chlorophyll accumulation in red light. Contributes to most blue light deetiolation responses. May act as a chemical magnetoreceptor, via magnetically sensitive kinetics and quantum yields of photo-induced flavin / tryptophan radical pairs. The effect of near-null magnetic field on flowering is altered by changes of blue light cycle and intensity in a CRY1/CRY2-dependent manner. Involved in the strigolactone signaling that regulates hypocotyl growth in response to blue light. Modulates temperature-dependent growth and physiology maintenance, especially at warm ambient temperatures (e.g. 27 degrees Celsius) and in white light and low-light conditions, via HFR1-dependent activity; this process requires PTAC12/HMR/PAP5 (transcriptional transactivator). Functionally, implicated in promoting R protein-mediated resistance to Pseudomonas syringae pv. tomato (Pst.) DC3000 under continuous light conditions. Promotes systemic acquired resistance (SAR) and PR gene expression triggered by P.syringae. This chain is Cryptochrome-1, found in Arabidopsis thaliana (Mouse-ear cress).